The primary structure comprises 407 residues: Phosphopentomutase (407 aa).

Positions 10, 306, 311, 347, 348, and 359 each coordinate Mn(2+).

This sequence belongs to the phosphopentomutase family. Mn(2+) serves as cofactor.

It is found in the cytoplasm. The enzyme catalyses 2-deoxy-alpha-D-ribose 1-phosphate = 2-deoxy-D-ribose 5-phosphate. It carries out the reaction alpha-D-ribose 1-phosphate = D-ribose 5-phosphate. It participates in carbohydrate degradation; 2-deoxy-D-ribose 1-phosphate degradation; D-glyceraldehyde 3-phosphate and acetaldehyde from 2-deoxy-alpha-D-ribose 1-phosphate: step 1/2. Isomerase that catalyzes the conversion of deoxy-ribose 1-phosphate (dRib-1-P) and ribose 1-phosphate (Rib-1-P) to deoxy-ribose 5-phosphate (dRib-5-P) and ribose 5-phosphate (Rib-5-P), respectively. This chain is Phosphopentomutase, found in Buchnera aphidicola subsp. Acyrthosiphon pisum (strain APS) (Acyrthosiphon pisum symbiotic bacterium).